A 221-amino-acid polypeptide reads, in one-letter code: Ras-related protein Rab-28 (221 aa).

S2 carries the post-translational modification N-acetylserine. Residue S8 is modified to Phosphoserine. Positions 21, 24, 25, 26, 27, 38, 39, 41, and 44 each coordinate GTP. T26 contacts Mg(2+). The tract at residues 35 to 49 (ETFGKRYKQTIGLDF) is switch I. Mg(2+) is bound by residues T44 and D68. The switch II stretch occupies residues 68-85 (DIGGQTIGGKMLDKYIYG). G71, N129, K130, D132, A160, and K161 together coordinate GTP. C218 carries the cysteine methyl ester modification. C218 is lipidated: S-farnesyl cysteine. Positions 219–221 (AVQ) are cleaved as a propeptide — removed in mature form.

It belongs to the small GTPase superfamily. Rab family. Interacts (prenylated form) with PDE6D; the interaction promotes RAB28 delivery to the photoreceptor outer segments. Interacts with KCNJ13; the interaction may facilitate cone outer segments phagocytosis. Also participates in nuclear factor kappa-B p65/RELA nuclear transport in endothelial cells. Mg(2+) serves as cofactor. Isoprenylated.

It localises to the cell membrane. Its subcellular location is the cytoplasm. The protein localises to the cytoskeleton. The protein resides in the cilium basal body. It is found in the nucleus. The catalysed reaction is GTP + H2O = GDP + phosphate + H(+). Regulated by guanine nucleotide exchange factors (GEFs) which promote the exchange of bound GDP for free GTP. Regulated by GTPase activating proteins (GAPs) which increase the GTP hydrolysis activity. Inhibited by GDP dissociation inhibitors (GDIs). In terms of biological role, the small GTPases Rab are key regulators of intracellular membrane trafficking, from the formation of transport vesicles to their fusion with membranes. Rabs cycle between an inactive GDP-bound form and an active GTP-bound form that is able to recruit to membranes different sets of downstream effectors directly responsible for vesicle formation, movement, tethering and fusion. RAB28 is required for shedding and phagocytosis of cone cell outer segments (OS) discs in the retina. Also participates in nuclear factor kappa-B p65/RELA nuclear transport in endothelial cells. This chain is Ras-related protein Rab-28 (RAB28), found in Pongo abelii (Sumatran orangutan).